A 271-amino-acid chain; its full sequence is 5-deoxy-glucuronate isomerase (271 aa).

It belongs to the isomerase IolB family.

It carries out the reaction 5-deoxy-D-glucuronate = 5-dehydro-2-deoxy-D-gluconate. Its pathway is polyol metabolism; myo-inositol degradation into acetyl-CoA; acetyl-CoA from myo-inositol: step 4/7. Involved in the isomerization of 5-deoxy-glucuronate (5DG) to 5-dehydro-2-deoxy-D-gluconate (DKG or 2-deoxy-5-keto-D-gluconate). The chain is 5-deoxy-glucuronate isomerase from Bacillus subtilis subsp. natto.